The chain runs to 382 residues: MTPSQRVSAVFAEQFEQQPDLLVRAPGRVNLIGEHTDYNDGFVLPCAIDYETCVAIGLRDDSLVHVIAADYGNQRDLFDLDQPIGHHADQRWSDYIRGVVKYLQERGYPLRGLNLVVSGNVPQGAGLSSSASLEVAIGQAFKEALGLAITQAEIALNGQQAENQFVGCNCGIMDQMISASGKQDHALLLDCRSLETRLIPMPTDLAVLIVNSNVRRGLVDSEYNTRRQQCEAAARHYGVKALRDLDLAALEAGKAGLDEVCYRRARHVVGDNSRTLAAADALAQGDLVRLGELMADSHAAMRDDFEITVPAIDGLVEIIKARIGTEGGVRMTGGGFGGCVVALLHPDKVAEVIAAVDAEYPARFGLKADSYVCRASAGAGKL.

Substrate is bound at residue 34 to 37; that stretch reads EHTD. Residue 124 to 130 participates in ATP binding; sequence GAGLSSS. Mg(2+) contacts are provided by S130 and E162. D174 functions as the Proton acceptor in the catalytic mechanism. Y223 contacts substrate.

It belongs to the GHMP kinase family. GalK subfamily.

It is found in the cytoplasm. The enzyme catalyses alpha-D-galactose + ATP = alpha-D-galactose 1-phosphate + ADP + H(+). It participates in carbohydrate metabolism; galactose metabolism. Functionally, catalyzes the transfer of the gamma-phosphate of ATP to D-galactose to form alpha-D-galactose-1-phosphate (Gal-1-P). The polypeptide is Galactokinase (Aeromonas hydrophila subsp. hydrophila (strain ATCC 7966 / DSM 30187 / BCRC 13018 / CCUG 14551 / JCM 1027 / KCTC 2358 / NCIMB 9240 / NCTC 8049)).